The sequence spans 366 residues: MQVKDQLSLLQPYKPGKSPEQMKEVYGDHSFVKLASNENSFGCSPRVLDELQKSWLDHALYPDGGATTLRQTIANKLHVQMEQVLCGSGLDEVIQIISRAVLKAGDNIVTAGATFPQYRHHAIIEGCEVKEVALNNGVYDLDEISSVVDNNTKIVWICNPNNPTGTYVNDRKLTQFIEGISENTLIVIDEAYYEYVTAKDFPETLPLLEKHKNILVLRTFSKAYGLASFRVGYAVGHEELIEKLNVVRLPFNVSSLAQKAATIAFGDDEFIEEIVRVNTEGLRQYESFCKENEIPFYQSQTNFIFLPVENGGEIYEACAHAGFIIRPFPNGVRITVGTREQNEGVISVLQQHFENKKRKSRDEANV.

The segment at 1–21 is disordered; sequence MQVKDQLSLLQPYKPGKSPEQ. N6-(pyridoxal phosphate)lysine is present on Lys222.

It belongs to the class-II pyridoxal-phosphate-dependent aminotransferase family. Histidinol-phosphate aminotransferase subfamily. In terms of assembly, homodimer. Pyridoxal 5'-phosphate is required as a cofactor.

It catalyses the reaction L-histidinol phosphate + 2-oxoglutarate = 3-(imidazol-4-yl)-2-oxopropyl phosphate + L-glutamate. It participates in amino-acid biosynthesis; L-histidine biosynthesis; L-histidine from 5-phospho-alpha-D-ribose 1-diphosphate: step 7/9. In Bacillus cereus (strain ZK / E33L), this protein is Histidinol-phosphate aminotransferase 2.